The following is a 769-amino-acid chain: Scarecrow-like protein 14 (769 aa).

Disordered regions lie at residues 1–23 (MGSY…DFDL), 128–157 (PSSS…GAFS), 279–320 (TEKK…ERSN), and 364–388 (TAQS…DSKK). Positions 384 to 765 (NDSKKETADL…RIVYASSLWV (382 aa)) constitute a GRAS domain. The segment at 391–451 (ADLRTLLVLC…EARLAGTGTQ (61 aa)) is leucine repeat I (LRI). A VHIID region spans residues 470-536 (YQTYMSVCPF…GGSPKLRITG (67 aa)). Positions 501–505 (IHIID) match the VHIID motif. Positions 552–584 (ETGHRLARYCQRHNVPFEYNAIAQKWETIQVED) are leucine repeat II (LRII). The interval 593–687 (VVVNSLFRFR…KEFYGREIVN (95 aa)) is PFYRE. An SAW region spans residues 690–765 (ACEGTERVER…RIVYASSLWV (76 aa)).

This sequence belongs to the GRAS family. In terms of tissue distribution, expressed in roots, shoots, flowers and siliques.

It is found in the nucleus. Probable transcription factor involved in plant development. This chain is Scarecrow-like protein 14 (SCL14), found in Arabidopsis thaliana (Mouse-ear cress).